The primary structure comprises 588 residues: uncharacterized protein (588 aa).

The next 7 helical transmembrane spans lie at 14–34 (FLLFLPYFIGLLFLGFIKGIV), 49–69 (AVILSLLPVHIVWTFYSIVSA), 78–98 (IFLCLCLPAAIILWPIVGILG), 184–204 (ALVVSVLGILVDPPVISLVAI), 235–255 (VPIAGLAILLWPLAVTGAVIG), 257–274 (VISSIFLGAYAGVVSYQE), and 275–292 (SSFYYGLCYIVASVSIYD). Phosphoserine is present on Ser486. The interval 566 to 588 (RKGSVNGSDQESQKGVSRNVDIV) is disordered. Positions 570–581 (VNGSDQESQKGV) are enriched in polar residues.

The protein localises to the membrane. This is an uncharacterized protein from Arabidopsis thaliana (Mouse-ear cress).